A 150-amino-acid chain; its full sequence is Large ribosomal subunit protein uL15 (150 aa).

The segment at 1–57 is disordered; the sequence is MRLEDIRPQAGSTRRRRRLGRGVSAGQGASCGKGMRGQKARKGGSTRPGFEGGQTPL. The span at 23 to 35 shows a compositional bias: gly residues; the sequence is VSAGQGASCGKGM.

This sequence belongs to the universal ribosomal protein uL15 family. In terms of assembly, part of the 50S ribosomal subunit.

In terms of biological role, binds to the 23S rRNA. The polypeptide is Large ribosomal subunit protein uL15 (Synechococcus sp. (strain JA-2-3B'a(2-13)) (Cyanobacteria bacterium Yellowstone B-Prime)).